The primary structure comprises 1133 residues: Envelopment polyprotein (1133 aa).

The N-terminal stretch at 1-17 (MWSLLLLAALVGQGFAL) is a signal peptide. The Lumenal segment spans residues 18–484 (KNVFDMRIQC…PGFHGWATAA (467 aa)). Cystine bridges form between cysteine 27-cysteine 149, cysteine 61-cysteine 155, cysteine 107-cysteine 126, cysteine 131-cysteine 136, cysteine 173-cysteine 183, cysteine 208-cysteine 245, cysteine 232-cysteine 349, cysteine 374-cysteine 433, cysteine 378-cysteine 387, cysteine 403-cysteine 422, and cysteine 450-cysteine 473. N-linked (GlcNAc...) asparagine; by host glycosylation is present at asparagine 132. 2 N-linked (GlcNAc...) asparagine; by host glycosylation sites follow: asparagine 233 and asparagine 345. The N-linked (GlcNAc...) asparagine; by host glycan is linked to asparagine 397. The chain crosses the membrane as a helical span at residues 485–504 (LLITFCFGWVLIPACTLAIL). At 505–626 (LVLKFFANIL…NLFRYKSRCY (122 aa)) the chain is on the cytoplasmic side. Positions 514 to 531 (LHTSNQENRFKAILRKIK) are binding to the ribonucleoprotein. 2 consecutive CCHC-type zinc fingers follow at residues 543 to 563 (CEIC…NLSC) and 568 to 589 (CPYC…YKVC). 3 binding to the ribonucleoprotein regions span residues 586–603 (YKVC…KKTV), 590–601 (QATHRFREDLKK), and 609–623 (GPGC…RYKS). The region spanning 609 to 632 (GPGCYRTLNLFRYKSRCYILTMWT) is the ITAM domain. A YxxL motif is present at residues 613–616 (YRTL). The chain crosses the membrane as a helical span at residues 627-647 (ILTMWTLLLIIESILWAASAA). Topologically, residues 648 to 1104 (EIPLVPLWTD…WVMGIINGNW (457 aa)) are lumenal. 8 disulfides stabilise this stretch: cysteine 733–cysteine 768, cysteine 737–cysteine 775, cysteine 749–cysteine 883, cysteine 763–cysteine 894, cysteine 778–cysteine 902, cysteine 804–cysteine 813, cysteine 821–cysteine 830, and cysteine 861–cysteine 865. Positions 755–775 (YEYENSWACNPPDCPGVGTGC) are fusion loop. A glycan (N-linked (GlcNAc...) asparagine; by host) is linked at asparagine 926. 5 disulfide bridges follow: cysteine 968-cysteine 998, cysteine 991-cysteine 1043, cysteine 1008-cysteine 1013, cysteine 1044-cysteine 1049, and cysteine 1083-cysteine 1087. Residues 1105–1125 (VVLIVLCVLLLFSLILLSILC) traverse the membrane as a helical segment. Positions 1120–1133 (LLSILCPVRKHKKS) are binding to the ribonucleoprotein. Residues 1126 to 1133 (PVRKHKKS) are Cytoplasmic-facing.

This sequence belongs to the hantavirus envelope glycoprotein family. In terms of assembly, homodimer. Homotetramer; forms heterotetrameric Gn-Gc spikes in the pre-fusion conformation. Interacts (via C-terminus) with the nucleoprotein. Interacts with host TUFM; this interaction contributes to the virus-induced degradation of mitochondria by autophagy, which leads to degradation of host MAVS and inhibition of type I interferon (IFN) responses. Interacts with host MAP1LC3B; this interaction contributes to the virus-induced degradation of mitochondria by autophagy, which leads to degradation of host MAVS and inhibition of type I interferon (IFN) responses. Homodimer. Homotetramer; forms heterotetrameric Gn-Gc spikes in the pre-fusion conformation. Homotrimer; forms homotrimer in the post-fusion conformation at acidic pH. Interacts (via C-terminus) with the nucleoprotein. In terms of processing, envelope polyprotein precursor is quickly cleaved in vivo just after synthesis, presumably by host signal peptidase.

It localises to the virion membrane. The protein localises to the host cell surface. The protein resides in the host Golgi apparatus membrane. Its subcellular location is the host endoplasmic reticulum membrane. It is found in the host mitochondrion. Its function is as follows. Forms homotetramers with glycoprotein C at the surface of the virion. Attaches the virion to host cell receptors including integrin ITGAV/ITGB3. This attachment induces virion internalization predominantly through clathrin-dependent endocytosis. Mediates the assembly and budding of infectious virus particles through its interaction with the nucleocapsid protein and the viral genome. May dysregulate normal immune and endothelial cell responses through an ITAM motif. Translocates to mitochondria, binds to host TUFM and recruits MAP1LC3B. These interactions induce mitochondrial autophagy and therefore destruction of host MAVS leading to inhibition of type I interferon (IFN) responses. Concomitant breakdown of glycoprotein N is apparently prevented by the nucleoprotein that may inhibit Gn-stimulated autophagosome-lysosome fusion. Interacts with the viral genomic RNA. Forms homotetramers with glycoprotein N at the surface of the virion. Attaches the virion to host cell receptors including integrin ITGAV/ITGB3. This attachment induces virion internalization predominantly through clathrin-dependent endocytosis. Class II fusion protein that promotes fusion of viral membrane with host endosomal membrane after endocytosis of the virion. This chain is Envelopment polyprotein (GP), found in Homo sapiens (Human).